We begin with the raw amino-acid sequence, 398 residues long: Cytochrome P450 165B3 (398 aa).

Cysteine 347 lines the heme pocket.

It belongs to the cytochrome P450 family. The cofactor is heme.

It functions in the pathway antibiotic biosynthesis; vancomycin biosynthesis. Involved in the coupling of aromatic side chains of the heptapeptide of vancomycin. The chain is Cytochrome P450 165B3 (cyp165B3) from Amycolatopsis orientalis (Nocardia orientalis).